The sequence spans 377 residues: MGAAVTLNRIKIETGIADIRDKYMVLDFNYPEYNRAVRFAEESYMYYYETSPGEIKPKFCLIDGMSIDHCSSFIVPEFAKQYVLIHGEPCSSFKFRPGSLIYYQNEVTPEYIKDLKYATDYIASGQRCHFIKKDYLLGDSDSVAKCCSKTNTKHCPKIFNNNYKTEHCDDFMTGFCRNDPGNPNCLEWLRVKRKPAMSTYSDICSKHMDARYCSEFIRIIRPDYFTFGDTALYVFCNDHKGNRNCWCANYPKSNSGDKYLGPRVCWLHECTDESRDRKWLYYNQDVQRTRCKYVGCTINVNSLALKNSQAELTSNCTRTTSAVGDVHPGEPVVNDKIKLPTWLGASITLVVISVIFYFISIYSRPKIKTNDINVRRR.

Residue Gly2 is the site of N-myristoyl glycine; by host attachment. Residues 2–341 lie on the Virion surface side of the membrane; it reads GAAVTLNRIK…VVNDKIKLPT (340 aa). A helical membrane pass occupies residues 342 to 362; it reads WLGASITLVVISVIFYFISIY. The Intravirion portion of the chain corresponds to 363–377; the sequence is SRPKIKTNDINVRRR.

Belongs to the orthopoxvirus OPG143 family. In terms of assembly, part of a stable entry-fusion complex (EFC) which is at least composed of proteins OPG143, OPG147, OPG155, OPG086, OPG094, OPG107, OPG104, and OPG099. Formation of the viral membrane is necessary for the assembly of the complex. Interacts with OPG094. Interacts with OPG153. Most cysteines are linked by disulfide bonds. They are created by the viral disulfide bond formation pathway, a poxvirus-specific redox pathway that operates on the cytoplasmic side of the MV membranes.

Its subcellular location is the virion membrane. Its function is as follows. Envelope protein part of the entry-fusion complex responsible for the virus membrane fusion with host cell membrane during virus entry. Also plays a role in cell-cell fusion (syncytium formation). This Monkeypox virus protein is Virion membrane protein OPG143 (OPG143).